Consider the following 407-residue polypeptide: Tryptophan synthase beta chain (407 aa).

K98 carries the post-translational modification N6-(pyridoxal phosphate)lysine.

This sequence belongs to the TrpB family. In terms of assembly, tetramer of two alpha and two beta chains. Requires pyridoxal 5'-phosphate as cofactor.

The enzyme catalyses (1S,2R)-1-C-(indol-3-yl)glycerol 3-phosphate + L-serine = D-glyceraldehyde 3-phosphate + L-tryptophan + H2O. It participates in amino-acid biosynthesis; L-tryptophan biosynthesis; L-tryptophan from chorismate: step 5/5. The beta subunit is responsible for the synthesis of L-tryptophan from indole and L-serine. This Bradyrhizobium sp. (strain BTAi1 / ATCC BAA-1182) protein is Tryptophan synthase beta chain.